The primary structure comprises 508 residues: Photosystem II CP47 reaction center protein (508 aa).

6 helical membrane-spanning segments follow: residues 21–36 (AVHL…WAGS), 101–115 (IVLS…IWHW), 140–156 (GIHL…FGAF), 203–218 (IAAG…FHLC), 237–252 (VLSS…AFVV), and 457–472 (CFAL…HGAR).

This sequence belongs to the PsbB/PsbC family. PsbB subfamily. In terms of assembly, PSII is composed of 1 copy each of membrane proteins PsbA, PsbB, PsbC, PsbD, PsbE, PsbF, PsbH, PsbI, PsbJ, PsbK, PsbL, PsbM, PsbT, PsbX, PsbY, PsbZ, Psb30/Ycf12, at least 3 peripheral proteins of the oxygen-evolving complex and a large number of cofactors. It forms dimeric complexes. Binds multiple chlorophylls. PSII binds additional chlorophylls, carotenoids and specific lipids. serves as cofactor.

Its subcellular location is the plastid. It is found in the chloroplast thylakoid membrane. Functionally, one of the components of the core complex of photosystem II (PSII). It binds chlorophyll and helps catalyze the primary light-induced photochemical processes of PSII. PSII is a light-driven water:plastoquinone oxidoreductase, using light energy to abstract electrons from H(2)O, generating O(2) and a proton gradient subsequently used for ATP formation. This is Photosystem II CP47 reaction center protein from Chlorella vulgaris (Green alga).